Consider the following 227-residue polypeptide: MSTAVTAMPDILDPMYWLGANGVFGSAVLPGILIIVFIETGLLFPLLPGESLLFTGGLLSASPAPPVTIGVLAPCVALVAVLGDQTAYFIGRRIGPALFKKEDSRFFKKHYVTESHAFFEKYGKWTIILARFVPIARTFVPVIAGVSYMRYPVFLGFDIVGGVAWGAGVTLAGYFLGSVPFVHMNFQLIILAIVFVSLLPALVSAARVYRARRNAPQSDPDPLVLPE.

5 helical membrane passes run 27–47 (AVLP…FPLL), 63–83 (PAPP…AVLG), 126–146 (TIIL…IAGV), 153–173 (VFLG…TLAG), and 186–206 (FQLI…VSAA).

This sequence belongs to the DedA family.

The protein localises to the cell membrane. This is an uncharacterized protein from Mycobacterium tuberculosis (strain CDC 1551 / Oshkosh).